A 62-amino-acid polypeptide reads, in one-letter code: DNA gyrase inhibitor YacG (62 aa).

Residues cysteine 9, cysteine 12, cysteine 27, and cysteine 31 each coordinate Zn(2+). Positions 43-53 (GYRIPGEKAPE) are enriched in basic and acidic residues. Residues 43–62 (GYRIPGEKAPESGDEEPGDE) are disordered.

It belongs to the DNA gyrase inhibitor YacG family. As to quaternary structure, interacts with GyrB. Zn(2+) serves as cofactor.

Functionally, inhibits all the catalytic activities of DNA gyrase by preventing its interaction with DNA. Acts by binding directly to the C-terminal domain of GyrB, which probably disrupts DNA binding by the gyrase. The polypeptide is DNA gyrase inhibitor YacG (Citrifermentans bemidjiense (strain ATCC BAA-1014 / DSM 16622 / JCM 12645 / Bem) (Geobacter bemidjiensis)).